A 146-amino-acid chain; its full sequence is Hemoglobin subunit beta-2 (146 aa).

Val-1 is subject to N-acetylvaline. Residues 2 to 146 form the Globin domain; the sequence is HLHGDEKAAV…VASALAHKYH (145 aa). Lys-17 bears the N6-succinyllysine mark. At Ser-44 the chain carries Phosphoserine. Lys-59 is modified (N6-succinyllysine). Residues His-63 and His-92 each contribute to the heme b site. Residue Arg-104 is modified to Asymmetric dimethylarginine. Thr-123 is subject to Phosphothreonine.

The protein belongs to the globin family. Heterotetramer of two alpha chains and two beta chains. Red blood cells.

Functionally, involved in oxygen transport from the lung to the various peripheral tissues. In Tapirus terrestris (Lowland tapir), this protein is Hemoglobin subunit beta-2 (HBB2).